Here is a 151-residue protein sequence, read N- to C-terminus: Sperm surface protein Sp17 (151 aa).

Disordered regions lie at residues 56–115 (DPAE…EKEE) and 127–151 (GHIA…EENK). Positions 62–98 (SKVEDRFYNNHAFEEQEPPEKSDPKQEESQISGKEEE) are enriched in basic and acidic residues. One can recognise an IQ domain in the interval 114 to 143 (EEVAAVKIQAAFRGHIAREEAKKMKTNSLQ).

As to quaternary structure, homodimer. May interact with ROPN1. Testis and sperm specific.

Its subcellular location is the membrane. Functionally, sperm surface zona pellucida binding protein. Helps to bind spermatozoa to the zona pellucida with high affinity. Might function in binding zona pellucida and carbohydrates. In Homo sapiens (Human), this protein is Sperm surface protein Sp17 (SPA17).